Reading from the N-terminus, the 490-residue chain is Glutamyl-tRNA(Gln) amidotransferase subunit A (490 aa).

Residues K79 and S154 each act as charge relay system in the active site. S178 (acyl-ester intermediate) is an active-site residue.

This sequence belongs to the amidase family. GatA subfamily. In terms of assembly, heterotrimer of A, B and C subunits.

It catalyses the reaction L-glutamyl-tRNA(Gln) + L-glutamine + ATP + H2O = L-glutaminyl-tRNA(Gln) + L-glutamate + ADP + phosphate + H(+). Allows the formation of correctly charged Gln-tRNA(Gln) through the transamidation of misacylated Glu-tRNA(Gln) in organisms which lack glutaminyl-tRNA synthetase. The reaction takes place in the presence of glutamine and ATP through an activated gamma-phospho-Glu-tRNA(Gln). The chain is Glutamyl-tRNA(Gln) amidotransferase subunit A from Roseiflexus castenholzii (strain DSM 13941 / HLO8).